A 391-amino-acid chain; its full sequence is tRNA-specific 2-thiouridylase MnmA (391 aa).

ATP is bound by residues 9–16 (GMSGGVDS) and Met-35. Positions 95 to 97 (NPD) are interaction with target base in tRNA. The Nucleophile role is filled by Cys-100. Cys-100 and Cys-196 are disulfide-bonded. Residue Gly-124 participates in ATP binding. An interaction with tRNA region spans residues 146-148 (KDQ). The active-site Cysteine persulfide intermediate is Cys-196. Residues 308–309 (RY) form an interaction with tRNA region.

It belongs to the MnmA/TRMU family.

Its subcellular location is the cytoplasm. It carries out the reaction S-sulfanyl-L-cysteinyl-[protein] + uridine(34) in tRNA + AH2 + ATP = 2-thiouridine(34) in tRNA + L-cysteinyl-[protein] + A + AMP + diphosphate + H(+). In terms of biological role, catalyzes the 2-thiolation of uridine at the wobble position (U34) of tRNA, leading to the formation of s(2)U34. The polypeptide is tRNA-specific 2-thiouridylase MnmA (Burkholderia orbicola (strain MC0-3)).